Consider the following 118-residue polypeptide: Large ribosomal subunit protein bL20 (118 aa).

This sequence belongs to the bacterial ribosomal protein bL20 family.

Binds directly to 23S ribosomal RNA and is necessary for the in vitro assembly process of the 50S ribosomal subunit. It is not involved in the protein synthesizing functions of that subunit. The sequence is that of Large ribosomal subunit protein bL20 from Hahella chejuensis (strain KCTC 2396).